We begin with the raw amino-acid sequence, 221 residues long: Ras-related protein Rab-28 (221 aa).

Position 2 is an N-acetylserine (S2). Position 8 is a phosphoserine (S8). Residues G21, G24, K25, T26, S27, G38, K39, Y41, and T44 each contribute to the GTP site. Residue T26 coordinates Mg(2+). Positions 35-49 are switch I; it reads ETFGKQYKQTIGLDF. Mg(2+) contacts are provided by T44 and D68. Residues 68 to 85 are switch II; the sequence is DIGGQTIGGKMLDKYIYG. Positions 71, 129, 130, 132, 160, and 161 each coordinate GTP. Position 218 is a cysteine methyl ester (C218). Residue C218 is the site of S-farnesyl cysteine attachment. Residues 219–221 constitute a propeptide, removed in mature form; sequence AVQ.

It belongs to the small GTPase superfamily. Rab family. In terms of assembly, interacts (prenylated form) with PDE6D; the interaction promotes RAB28 delivery to the photoreceptor outer segments. Interacts with KCNJ13; the interaction may facilitate cone outer segments phagocytosis. Interacts with RELA; the interaction contributes to RELA transport from cytoplasm to nucleus. Mg(2+) serves as cofactor. In terms of processing, isoprenylated. As to expression, testis, brain, and to much lower levels heart, skeletal muscle and fat cells. Expressed in the retina.

The protein resides in the cell membrane. It localises to the cytoplasm. Its subcellular location is the cytoskeleton. The protein localises to the cilium basal body. It is found in the nucleus. It catalyses the reaction GTP + H2O = GDP + phosphate + H(+). With respect to regulation, regulated by guanine nucleotide exchange factors (GEFs) which promote the exchange of bound GDP for free GTP. Regulated by GTPase activating proteins (GAPs) which increase the GTP hydrolysis activity. Inhibited by GDP dissociation inhibitors (GDIs). In terms of biological role, the small GTPases Rab are key regulators of intracellular membrane trafficking, from the formation of transport vesicles to their fusion with membranes. Rabs cycle between an inactive GDP-bound form and an active GTP-bound form that is able to recruit to membranes different sets of downstream effectors directly responsible for vesicle formation, movement, tethering and fusion. RAB28 is required for shedding and phagocytosis of cone cell outer segments (OS) discs in the retina. Also participates in nuclear factor kappa-B p65/RELA nuclear transport in endothelial cells. This chain is Ras-related protein Rab-28, found in Rattus norvegicus (Rat).